The chain runs to 285 residues: uncharacterized protein (285 aa).

A Guanylate cyclase domain is found at 92–199; the sequence is TLLLADVEES…PTINRTARLR (108 aa).

This sequence belongs to the adenylyl cyclase class-4/guanylyl cyclase family.

This is an uncharacterized protein from Mycobacterium tuberculosis (strain CDC 1551 / Oshkosh).